The primary structure comprises 470 residues: Na(+)-translocating NADH-quinone reductase subunit A (470 aa).

This sequence belongs to the NqrA family. In terms of assembly, composed of six subunits; NqrA, NqrB, NqrC, NqrD, NqrE and NqrF.

The enzyme catalyses a ubiquinone + n Na(+)(in) + NADH + H(+) = a ubiquinol + n Na(+)(out) + NAD(+). Functionally, NQR complex catalyzes the reduction of ubiquinone-1 to ubiquinol by two successive reactions, coupled with the transport of Na(+) ions from the cytoplasm to the periplasm. NqrA to NqrE are probably involved in the second step, the conversion of ubisemiquinone to ubiquinol. The sequence is that of Na(+)-translocating NADH-quinone reductase subunit A from Chlamydia caviae (strain ATCC VR-813 / DSM 19441 / 03DC25 / GPIC) (Chlamydophila caviae).